The chain runs to 231 residues: Potassium/proton antiporter CemA (231 aa).

Transmembrane regions (helical) follow at residues Phe7–Phe27, Ile104–Ser124, Ile154–Ile174, and Ile189–Ile209.

This sequence belongs to the CemA family.

Its subcellular location is the plastid. The protein resides in the chloroplast inner membrane. It catalyses the reaction K(+)(in) + H(+)(out) = K(+)(out) + H(+)(in). Functionally, contributes to K(+)/H(+) antiport activity by supporting proton efflux to control proton extrusion and homeostasis in chloroplasts in a light-dependent manner to modulate photosynthesis. Prevents excessive induction of non-photochemical quenching (NPQ) under continuous-light conditions. Indirectly promotes efficient inorganic carbon uptake into chloroplasts. In Pisum sativum (Garden pea), this protein is Potassium/proton antiporter CemA.